The following is a 76-amino-acid chain: ATP synthase subunit 9, mitochondrial (76 aa).

2 helical membrane-spanning segments follow: residues 14-34 and 56-76; these read ISTI…AALI and ALSE…LFAV.

It belongs to the ATPase C chain family. In terms of assembly, F-type ATPases have 2 components, CF(1) - the catalytic core - and CF(0) - the membrane proton channel. CF(1) has five subunits: alpha(3), beta(3), gamma(1), delta(1), epsilon(1). CF(0) has three main subunits: a, b and c.

The protein localises to the mitochondrion membrane. In terms of biological role, mitochondrial membrane ATP synthase (F(1)F(0) ATP synthase or Complex V) produces ATP from ADP in the presence of a proton gradient across the membrane which is generated by electron transport complexes of the respiratory chain. F-type ATPases consist of two structural domains, F(1) - containing the extramembraneous catalytic core and F(0) - containing the membrane proton channel, linked together by a central stalk and a peripheral stalk. During catalysis, ATP synthesis in the catalytic domain of F(1) is coupled via a rotary mechanism of the central stalk subunits to proton translocation. Part of the complex F(0) domain. A homomeric c-ring of probably 10 subunits is part of the complex rotary element. This is ATP synthase subunit 9, mitochondrial (ATP9) from Candida glabrata (strain ATCC 2001 / BCRC 20586 / JCM 3761 / NBRC 0622 / NRRL Y-65 / CBS 138) (Yeast).